Here is a 335-residue protein sequence, read N- to C-terminus: Rho guanine nucleotide exchange factor 39 (335 aa).

Positions 22 to 197 constitute a DH domain; the sequence is KRACTARELL…SETAQRVHTI (176 aa). The PH domain maps to 227-331; it reads WFLRQGWLLV…WYHSLTLAIS (105 aa).

The protein resides in the cell membrane. Promotes cell proliferation. The sequence is that of Rho guanine nucleotide exchange factor 39 (ARHGEF39) from Bos taurus (Bovine).